Here is a 68-residue protein sequence, read N- to C-terminus: Conotoxin Eb11.7 (68 aa).

Residues Met-1–Thr-26 form the signal peptide. 4 disulfides stabilise this stretch: Cys-29/Cys-43, Cys-36/Cys-48, Cys-42/Cys-52, and Cys-47/Cys-56. At Phe-60 the chain carries Phenylalanine amide. Residues Ala-64–Glu-68 constitute a propeptide that is removed on maturation.

This sequence belongs to the conotoxin I2 superfamily. Expressed by the venom duct.

The protein localises to the secreted. The polypeptide is Conotoxin Eb11.7 (Conus eburneus (Ivory cone)).